The chain runs to 435 residues: Citrate synthase (435 aa).

Active-site residues include His311 and Asp370.

It belongs to the citrate synthase family.

It catalyses the reaction oxaloacetate + acetyl-CoA + H2O = citrate + CoA + H(+). Its pathway is carbohydrate metabolism; tricarboxylic acid cycle; isocitrate from oxaloacetate: step 1/2. This Rickettsia bellii (strain RML369-C) protein is Citrate synthase (gltA).